The primary structure comprises 122 residues: Acidic phospholipase A2 1 (122 aa).

Disulfide bonds link C26–C115, C28–C44, C43–C94, C49–C122, C50–C87, C57–C81, and C75–C85. Positions 27, 29, and 31 each coordinate Ca(2+). H47 is an active-site residue. D48 contributes to the Ca(2+) binding site. The active site involves D88.

Belongs to the phospholipase A2 family. Group II subfamily. D49 sub-subfamily. In terms of assembly, homodimer. Requires Ca(2+) as cofactor. As to expression, expressed by the venom gland.

Its subcellular location is the secreted. It carries out the reaction a 1,2-diacyl-sn-glycero-3-phosphocholine + H2O = a 1-acyl-sn-glycero-3-phosphocholine + a fatty acid + H(+). Functionally, PLA2 catalyzes the calcium-dependent hydrolysis of the 2-acyl groups in 3-sn-phosphoglycerides. The sequence is that of Acidic phospholipase A2 1 from Protobothrops mucrosquamatus (Taiwan habu).